Here is a 406-residue protein sequence, read N- to C-terminus: MDNKPAQERRETWVPGAVIVGAGPSGLAAAACLAARGVPATVLERSDSLASTWRHRMYDRLALHLPKRFCELPLLPFPEEYPTYPSKDQFVAYMEAYAAAAGVAPRFGATVEEAAFDAAVGAWRVRLDGGEVLMARWLVVATGENAEPRVPDFPGMQKFAGCAMHTSEYKSGEQFAGKKVLVVGCGNSGMEVSLDLCRHGAKPSMVVRNTVHVLPREMFGLSTFGIAMALLRWLPVQLVDRFLLTAAHLILGNTGQFGLRRPKTGPIELKNLTGRTPVLDVGTLDHIKSGKIKVVGAVKEMTRQGVRFTDGKEEQFDTIILATGYRSNVPSWLKDAGDLFTREGISKVPFPNSWRGRNGLYTVGFTQRGLLGTSSDALNVAKDIHCQWRERDRSAINVLEISNSSF.

21–26 (GAGPSG) provides a ligand contact to FAD. 184-189 (GCGNSG) is an NADP(+) binding site.

The protein belongs to the FMO family. FAD serves as cofactor. Expressed in coleoptile tips, root tips, leaf blade tips, shoot apical meristem, vasculature of stems and flowers.

It catalyses the reaction indole-3-pyruvate + NADPH + O2 + H(+) = (indol-3-yl)acetate + CO2 + NADP(+) + H2O. In terms of biological role, involved in auxin biosynthesis. Converts the indole-3-pyruvic acid (IPA) produced by the TAA family to indole-3-acetic acid (IAA). Functions downstream of TAR2 in auxin biosynthesis. Functions upstream of WOX11, a transcription factor that promotes the development of crown roots. The polypeptide is Indole-3-pyruvate monooxygenase YUCCA1 (Oryza sativa subsp. japonica (Rice)).